The primary structure comprises 47 residues: Large ribosomal subunit protein bL34 (47 aa).

This sequence belongs to the bacterial ribosomal protein bL34 family.

The protein is Large ribosomal subunit protein bL34 of Rhodococcus erythropolis (strain PR4 / NBRC 100887).